The primary structure comprises 165 residues: Small ribosomal subunit protein eS10 (165 aa).

A disordered region spans residues 92-165 (ATLRRSRPET…FGRGRGQAPQ (74 aa)). Positions 97-128 (SRPETGRPRPKGLEGERPPRLPRGETDRDTYR) are enriched in basic and acidic residues. A compositionally biased stretch (low complexity) spans 142–153 (AGAGAATEFQFR). Positions 154–165 (GGFGRGRGQAPQ) are enriched in gly residues.

The protein belongs to the eukaryotic ribosomal protein eS10 family. As to quaternary structure, component of the small ribosomal subunit.

It is found in the cytoplasm. It localises to the nucleus. The protein localises to the nucleolus. Functionally, component of the 40S ribosomal subunit. The ribosome is a large ribonucleoprotein complex responsible for the synthesis of proteins in the cell. This chain is Small ribosomal subunit protein eS10 (rps10), found in Xenopus laevis (African clawed frog).